The chain runs to 199 residues: Twist-related protein (199 aa).

The tract at residues 1–43 (MQEHQLSRVTSGNKKKYQSFDDESRDEKRMKCDSTDKLESNSN) is disordered. Residues 25 to 39 (RDEKRMKCDSTDKLE) are compositionally biased toward basic and acidic residues. The bHLH domain occupies 51–102 (THRVIANIRERQRTQALNQSFSTLRKIIPTLPSDKLSKIQTLRLAAMYIDFL).

Efficient DNA binding requires dimerization with another bHLH protein. Homodimer. Expression is seen at the point of medusa formation in the ectodermal and endodermal bud tissues, and in the entocodon which gives rise to all smooth and striated muscle cells. After the subumbrellar plate differentiates from the endoderm, strong expression is detected until the medusa detaches from the gonzoid. Expression is observed in the distal part of the medusa but diminishes in entocodon-derived muscles as the tissues differentiate, with expression disappearing completely after stage 8. In later stages expression is seen in the distal and proximal parts of the bud and depending on state of maturity, in the developing gonadal tissue.

The protein localises to the nucleus. In terms of biological role, probable transcription factor, which may be responsible for the formation of myoepithelial cells in early muscle development in larva and the formation of non-muscle tissues in later bud stages and mesoderm-like structures in the medusa. This is Twist-related protein from Podocoryna carnea (Hydrozoan).